The primary structure comprises 387 residues: Formate-dependent phosphoribosylglycinamide formyltransferase (387 aa).

N(1)-(5-phospho-beta-D-ribosyl)glycinamide contacts are provided by residues 12–13 (EL) and glutamate 72. ATP is bound by residues arginine 104, lysine 145, 150 to 155 (SSGKGQ), 185 to 188 (EEFI), and glutamate 193. The ATP-grasp domain maps to 109-300 (DLAAKDLKLL…EFELHLRAIL (192 aa)). Positions 258 and 270 each coordinate Mg(2+). N(1)-(5-phospho-beta-D-ribosyl)glycinamide contacts are provided by residues aspartate 277, lysine 348, and 355–356 (RR).

It belongs to the PurK/PurT family. In terms of assembly, homodimer.

The enzyme catalyses N(1)-(5-phospho-beta-D-ribosyl)glycinamide + formate + ATP = N(2)-formyl-N(1)-(5-phospho-beta-D-ribosyl)glycinamide + ADP + phosphate + H(+). It participates in purine metabolism; IMP biosynthesis via de novo pathway; N(2)-formyl-N(1)-(5-phospho-D-ribosyl)glycinamide from N(1)-(5-phospho-D-ribosyl)glycinamide (formate route): step 1/1. Functionally, involved in the de novo purine biosynthesis. Catalyzes the transfer of formate to 5-phospho-ribosyl-glycinamide (GAR), producing 5-phospho-ribosyl-N-formylglycinamide (FGAR). Formate is provided by PurU via hydrolysis of 10-formyl-tetrahydrofolate. The polypeptide is Formate-dependent phosphoribosylglycinamide formyltransferase (Leptospira interrogans serogroup Icterohaemorrhagiae serovar copenhageni (strain Fiocruz L1-130)).